The primary structure comprises 312 residues: Ribonuclease Z (312 aa).

Zn(2+) contacts are provided by histidine 62, histidine 64, aspartate 66, histidine 67, histidine 144, aspartate 215, and histidine 273. The active-site Proton acceptor is aspartate 66.

This sequence belongs to the RNase Z family. Homodimer. Requires Zn(2+) as cofactor.

It catalyses the reaction Endonucleolytic cleavage of RNA, removing extra 3' nucleotides from tRNA precursor, generating 3' termini of tRNAs. A 3'-hydroxy group is left at the tRNA terminus and a 5'-phosphoryl group is left at the trailer molecule.. Zinc phosphodiesterase, which displays some tRNA 3'-processing endonuclease activity. Probably involved in tRNA maturation, by removing a 3'-trailer from precursor tRNA. The protein is Ribonuclease Z of Prochlorococcus marinus (strain MIT 9215).